A 2474-amino-acid polypeptide reads, in one-letter code: Polyprotein P1234 (2474 aa).

Residues 28–257 (EATQVTDNDH…EERILLRSWH (230 aa)) enclose the Alphavirus-like MT domain. The tract at residues 242–261 (GSTIYTEERILLRSWHLPNV) is nsP1 membrane-binding. C417 is lipidated: S-palmitoyl cysteine; by host. A (+)RNA virus helicase ATP-binding domain is found at 674–839 (CVKKADAGPM…HEICTEVYHK (166 aa)). A ribonucleoside 5'-triphosphate is bound at residue 719-726 (GVPGSGKS). In terms of domain architecture, (+)RNA virus helicase C-terminal spans 840–988 (SISRRCTKTV…LEEWQAEHDA (149 aa)). Positions 1001-1320 (DVYQNKVHVC…IVLNNIYQGS (320 aa)) constitute a Peptidase C9 domain. Residues 1002-1021 (VYQNKVHVCWAKALEPVLAT) form a nucleolus localization signal region. Catalysis depends on C1010, which acts as the For cysteine protease nsP2 activity. Positions 1054-1063 (TRFFGVDIDS) match the Nuclear export signal motif. The For cysteine protease nsP2 activity role is filled by H1079. The short motif at 1177–1181 (PGKRV) is the Nuclear localization signal element. Residues 1328 to 1486 (APAYRVIRGD…RIKDAIARKE (159 aa)) form the Macro domain. D1337, N1351, G1359, G1438, I1439, and Y1440 together coordinate ADP-D-ribose. The Zn(2+) site is built by C1589, C1591, C1614, and C1632. The interval 1773–1785 (LITFDSVTDIFEN) is binding to host G3BP family members. The disordered stretch occupies residues 1820-1841 (TEEKPIPKPRTRTTKYKQPPGV). Residues 1838 to 1854 (PPGVARSISEAELDEFI) form a binding to host FXR family members region. The RdRp catalytic domain maps to 2231 to 2346 (DAVLETDIAS…KGVKSDALMA (116 aa)).

Interacts with non-structural protein 3. Interacts with RNA-directed RNA polymerase nsP4. Interacts with protease nsP2. interacts with itself. As to quaternary structure, interacts with mRNA-capping enzyme nsP1. Interacts with host DDX1. Interacts with host DDX3. Interacts (via C-terminus) with host FXR1; this interaction inhibits the formation of host stress granules on viral mRNAs and the nsp3-FXR1 complexes bind viral RNAs and probably orchestrate the assembly of viral replication complexes. Interacts (via C-terminus) with host FXR2; this interaction inhibits the formation of host stress granules on viral mRNAs and the nsp3-FXR2 complexes bind viral RNAs and probably orchestrate the assembly of viral replication complexes. Interacts (via C-terminus) with host FMR1; this interaction inhibits the formation of host stress granules on viral mRNAs and the nsp3-FMR1 complexes bind viral RNAs and probably orchestrate the assembly of viral replication complexes. Interacts (via C-terminus) with host G3BP1; this interaction inhibits the formation of host stress granules on viral mRNAs and the nsp3-G3BP1 complexes bind viral RNAs and probably orchestrate the assembly of viral replication complexes. Interacts (via C-terminus) with host G3BP2; this interaction inhibits the formation of host stress granules on viral mRNAs and the nsp3-G3BP2 complexes bind viral RNAs and probably orchestrate the assembly of viral replication complexes. In terms of assembly, interacts with mRNA-capping enzyme nsP1. Interacts with protease nsP2. interacts with itself. Interacts with RNA-directed RNA polymerase nsP4. Interacts with mRNA-capping enzyme nsP1. Interacts with KPNA1/karyopherin-alpha1; this interaction probably allows the active transport of protease nsP2 into the host nucleus. Requires Mg(2+) as cofactor. The cofactor is Mn(2+). In terms of processing, specific enzymatic cleavages in vivo yield mature proteins. The processing of the polyprotein is temporally regulated. In early stages (1.7 hpi), P1234 is first cleaved in trans through its nsP2 protease activity, releasing P123' and nsP4, which associate to form the early replication complex. At the same time, P1234 is also cut at the nsP1/nsP2 site early in infection but with lower efficiency. After replication of the viral minus-strand RNAs (4 hpi), the polyproteins are cut at the nsP1/nsP2 and nsP2/nsP3 sites very efficiently, preventing accumulation of P123' and P1234 and allowing the formation of the late replication complex. NsP3'/nsP4 site is not cleaved anymore and P34 is produced rather than nsP4. Specific enzymatic cleavages in vivo yield mature proteins. The processing of the polyprotein is temporally regulated. In early stages (1.7 hpi), P123 is cleaved at the nsP1/nsP2 site with low efficiency. After replication of the viral minus-strand RNAs (4 hpi), the polyproteins are cut at the nsP1/nsP2 and nsP2/nsP3 sites very efficiently, preventing accumulation of P123 and allowing the formation of the late replication complex. Post-translationally, specific enzymatic cleavages in vivo yield mature proteins. The processing of the polyprotein is temporally regulated. In early stages (1.7 hpi), P123' is cleaved at the nsP1/nsP2 site with low efficiency. After replication of the viral minus-strand RNAs (4 hpi), the polyproteins are cut at the nsP1/nsP2 and nsP2/nsP3 sites very efficiently, preventing accumulation of P123' and allowing the formation of the late replication complex. In terms of processing, palmitoylated by host palmitoyltransferases ZDHHC2 and ZDHHC19. Phosphorylated by host on serines and threonines. Post-translationally, ubiquitinated; targets the protein for rapid degradation via the ubiquitin system. Nsp4 is present in extremely low quantities due to low frequency of translation through the amber stop-codon and the degradation by the ubiquitin pathway.

It is found in the host cytoplasmic vesicle membrane. The protein localises to the host cell membrane. Its subcellular location is the host cell projection. It localises to the host filopodium. The protein resides in the host nucleus. It is found in the host cytoplasm. The catalysed reaction is GTP + S-adenosyl-L-methionine = N(7)-methyl-GTP + S-adenosyl-L-homocysteine. It carries out the reaction N(7)-methyl-GTP + L-histidyl-[protein] = N(tele)-(N(7)-methylguanosine 5'-phospho)-L-histidyl-[protein] + diphosphate. It catalyses the reaction N(tele)-(N(7)-methylguanosine 5'-phospho)-L-histidyl-[protein] + a 5'-end diphospho-(purine-ribonucleoside) in mRNA + H(+) = a 5'-end (N(7)-methyl 5'-triphosphoguanosine)-(purine-ribonucleoside) in mRNA + L-histidyl-[protein]. The enzyme catalyses a 5'-end triphospho-ribonucleoside in mRNA + H2O = a 5'-end diphospho-ribonucleoside in mRNA + phosphate + H(+). The catalysed reaction is a ribonucleoside 5'-triphosphate + H2O = a ribonucleoside 5'-diphosphate + phosphate + H(+). It carries out the reaction ATP + H2O = ADP + phosphate + H(+). It catalyses the reaction RNA(n) + a ribonucleoside 5'-triphosphate = RNA(n+1) + diphosphate. The enzyme catalyses 4-O-(ADP-D-ribosyl)-L-aspartyl-[protein] + H2O = L-aspartyl-[protein] + ADP-D-ribose + H(+). The catalysed reaction is 5-O-(ADP-D-ribosyl)-L-glutamyl-[protein] + H2O = L-glutamyl-[protein] + ADP-D-ribose + H(+). It carries out the reaction RNA(n) + ATP = RNA(n)-3'-adenine ribonucleotide + diphosphate. It catalyses the reaction ADP-alpha-D-ribose 1''-phosphate + H2O = ADP-D-ribose + phosphate. With respect to regulation, inhibited by sinefungin. Functionally, inactive precursor of the viral replicase, which is activated by cleavages carried out by the viral protease nsP2. In terms of biological role, the early replication complex formed by the polyprotein P123 and nsP4 synthesizes the minus-strand RNAs (antigenome). Polyprotein P123 is a short-lived polyprotein that accumulates during early stage of infection. As soon P123 is cleaved into mature proteins, the plus-strand RNAs synthesis begins. The early replication complex formed by the polyprotein P123' and nsP4 synthesizes minus-strand RNAs (antigenome). Polyprotein P123' is a short-lived polyprotein that accumulates during early stage of infection. As soon P123' is cleaved into mature proteins, the plus-strand RNAs synthesis begins. Its function is as follows. Cytoplasmic capping enzyme that catalyzes two virus-specific reactions: methyltransferase and nsP1 guanylyltransferase. mRNA-capping is necessary since all viral RNAs are synthesized in the cytoplasm, and host capping enzymes are restricted to the nucleus. The enzymatic reaction involves a covalent link between 7-methyl-GMP and nsP1, whereas eukaryotic capping enzymes form a covalent complex only with GMP. NsP1 capping consists in the following reactions: GTP is first methylated into 7-methyl-GMP and then is covalently linked to nsP1 to form the m7GMp-nsP1 complex from which 7-methyl-GMP complex is transferred to the mRNA to create the cap structure. NsP1 is also needed for the initiation of the minus-strand RNAs synthesis. Probably serves as a membrane anchor for the replication complex composed of nsP1-nsP4. Nsp1 is needed for the initiation of the minus-strand RNAs synthesis. Palmitoylated nsP1 is remodeling host cell cytoskeleton, and induces filopodium-like structure formation at the surface of the host cell. Functionally, multifunctional protein whose N-terminus is part of the RNA polymerase complex and displays NTPase, RNA triphosphatase and helicase activities. NTPase and RNA triphosphatase are involved in viral RNA capping and helicase keeps a check on the dsRNA replication intermediates. The C-terminus harbors a protease that specifically cleaves the polyproteins and releases the mature proteins. Required for the shutoff of minus-strand RNAs synthesis. Inhibits host translation to ensure maximal viral gene expression and evade host immune response. In terms of biological role, seems to be essential for minus-strand RNAs and subgenomic 26S mRNAs synthesis. Displays mono-ADP-ribosylhydrolase activity. ADP-ribosylation is a post-translational modification that controls various processes of the host cell and the virus probably needs to revert it for optimal viral replication. Binds proteins of FXR and G3BP families and sequesters them into the viral RNA replication complexes thereby inhibiting the formation of host stress granules on viral mRNAs. The nsp3-FXR and nsp3-G3BP complexes bind viral RNAs and probably orchestrate the assembly of viral replication complexes, thanks to the ability of G3BP and FXR family members to self-assemble and bind DNA. Seems to be essential for minus-strand RNAs and subgenomic 26S mRNAs synthesis. Displays mono-ADP-ribosylhydrolase activity. ADP-ribosylation is a post-translational modification that controls various processes of the host cell and the virus probably needs to revert it for optimal viral replication. Binds proteins of FXR and G3BP families and sequesters them into the viral RNA replication complexes thereby inhibiting the formation of host stress granules on viral mRNAs. The nsp3'-FXR and nsp3-G3BP complexes bind viral RNAs and probably orchestrate the assembly of viral replication complexes, thanks to the ability of G3BP and FXR family members to self-assemble and bind DNA. Its function is as follows. RNA dependent RNA polymerase. Replicates genomic and antigenomic RNA by recognizing replications specific signals. The early replication complex formed by the polyprotein P123 and nsP4 synthesizes minus-strand RNAs. The late replication complex composed of fully processed nsP1-nsP4 is responsible for the production of genomic and subgenomic plus-strand RNAs. This is Polyprotein P1234 from Eastern equine encephalitis virus (strain PE-3.0815) (EEEV).